We begin with the raw amino-acid sequence, 118 residues long: Heavy metal-associated isoprenylated plant protein 12 (118 aa).

Positions 1–65 (MQVVVLKLDV…KICHTEFISV (65 aa)) constitute an HMA domain. Positions 68-87 (VKEPEKKKPDDPKKPETKPP) are disordered. Residues 69 to 86 (KEPEKKKPDDPKKPETKP) show a composition bias toward basic and acidic residues. C115 bears the Cysteine methyl ester mark. C115 is lipidated: S-farnesyl cysteine. Residues 116-118 (VTS) constitute a propeptide, removed in mature form.

This sequence belongs to the HIPP family.

In terms of biological role, probable heavy-metal-binding protein. This chain is Heavy metal-associated isoprenylated plant protein 12, found in Arabidopsis thaliana (Mouse-ear cress).